Reading from the N-terminus, the 312-residue chain is Olfactory receptor 4F6 (312 aa).

Residues Met1–Leu25 are Extracellular-facing. N-linked (GlcNAc...) asparagine glycosylation is present at Asn5. A helical membrane pass occupies residues Leu26 to Val49. Over Thr50–Ser57 the chain is Cytoplasmic. The helical transmembrane segment at Pro58–Pro79 threads the bilayer. Over Lys80 to Gln100 the chain is Extracellular. Cysteines 97 and 189 form a disulfide. Residues Ile101–Phe120 form a helical membrane-spanning segment. Residues Asp121–Gln139 lie on the Cytoplasmic side of the membrane. A helical membrane pass occupies residues Arg140–Ile158. The Extracellular portion of the chain corresponds to Gln159 to Leu195. Residues Gly196–Ile219 traverse the membrane as a helical segment. Topologically, residues Phe220 to Lys235 are cytoplasmic. The chain crosses the membrane as a helical span at residues Ala236 to Tyr258. Topologically, residues Ile259–Lys269 are extracellular. The helical transmembrane segment at Phe270–Phe289 threads the bilayer. Residues Arg290–Phe312 are Cytoplasmic-facing.

It belongs to the G-protein coupled receptor 1 family.

The protein localises to the cell membrane. Odorant receptor. The polypeptide is Olfactory receptor 4F6 (OR4F6) (Homo sapiens (Human)).